The primary structure comprises 457 residues: Cell division cycle 20.1, cofactor of APC complex (457 aa).

7 WD repeats span residues 138 to 175, 180 to 219, 223 to 260, 264 to 303, 312 to 354, 356 to 397, and 400 to 439; these read VDDF…TSEL, EEKG…QLRT, GHQS…PIVE, GHTQ…SNST, EHTS…CLNS, DTGS…KMAE, and GHTS…ETAK.

It belongs to the WD repeat CDC20/Fizzy family. As to quaternary structure, the APC/C is composed of at least 11 subunits that stay tightly associated throughout the cell cycle. Interacts with APC10, FZR1, FZR2, FZR3. Binds to GIG1 and PYM. Part of the mitotic checkpoint complex (MCC); interacts with MAD2, BUB3.1, BUBR1 and BUB1. Binds to cyclins CYCA1-2, CYCB2-1 and CYCB2-2. Interacts with PANS1. Expressed in meristems and organ primordia. Present in flowers, leaves, stems, roots, pollen grains and developing seeds.

It is found in the nucleus. The protein operates within protein modification; protein ubiquitination. In terms of biological role, component of the anaphase promoting complex/cyclosome (APC/C), a cell cycle-regulated E3 ubiquitin-protein ligase complex that controls progression through mitosis and the G1 phase of the cell cycle. The chain is Cell division cycle 20.1, cofactor of APC complex (CDC20-1) from Arabidopsis thaliana (Mouse-ear cress).